The following is a 337-amino-acid chain: Zinc finger protein 488 (337 aa).

The segment covering 1–10 has biased composition (polar residues); sequence MAAGTSTLLS. Disordered stretches follow at residues 1-32, 55-83, and 146-179; these read MAAGTSTLLSLSGPADHMAEGKGAPLRPSVEK, SDTAAGKGSQDEAYTELSLPTAPNKPRLD, and SAWPGAPRSEQKSAFSKPAKRPAEKPKRSPMLLA. Positions 69–184 are important for transcriptional repression activity; it reads TELSLPTAPN…PMLLAGGSAE (116 aa). C2H2-type zinc fingers lie at residues 272–299 and 314–336; these read NWCAKCNLAFRLTADLVFHMRSHHKREH and LTCPVCHEYFRERHHLSRHMASH. The Nuclear localization signal signature appears at 295-302; that stretch reads HKREHVGP.

The protein belongs to the krueppel C2H2-type zinc-finger protein family. As to quaternary structure, interacts with OLIG2.

The protein localises to the nucleus. Transcriptional repressor. Plays a role in oligodendrocyte differentiation, together with OLIG2. Mediates Notch signaling-activated formation of oligodendrocyte precursors. Promotes differentiation of adult neural stem progenitor cells (NSPCs) into mature oligodendrocytes and contributes to remyelination following nerve injury. The sequence is that of Zinc finger protein 488 (Znf488) from Mus musculus (Mouse).